The following is a 243-amino-acid chain: Ice-binding protein K3-B1 (243 aa).

The signal sequence occupies residues 1-20 (MFSASSLLAVIALAISSVSA).

This sequence belongs to the ice-binding protein family.

In terms of biological role, binds to the surface of ice crystals. Has low thermal hysteresis (TH) activity, which is the ability to lower the freezing point of an aqueous solution below its melting point. The TH activity of this protein is approximately 0.3 degrees Celsius at 11 mM. The polypeptide is Ice-binding protein K3-B1 (Typhula ishikariensis (Gray snow mold fungus)).